The chain runs to 491 residues: Tyrosine 3-monooxygenase (491 aa).

A Phosphoserine; by CaMK2 modification is found at Ser-19. Ser-31 carries the post-translational modification Phosphoserine. Ser-40 bears the Phosphoserine; by CaMK2 and PKA mark. Fe cation-binding residues include His-324, His-329, and Glu-369. Ser-465 carries the post-translational modification Phosphoserine.

It belongs to the biopterin-dependent aromatic amino acid hydroxylase family. In terms of assembly, homotetramer. Interacts (when phosphorylated at Ser-19) with YWHAG; one YWHAG dimer bounds to one TH tetramer and this interaction may influence the phosphorylation and dephosphorylation of other sites. Interacts with NT5DC2; the interaction results in reduced phosphorylation and decreased catalytic activity of TH. Requires Fe(2+) as cofactor. Phosphorylated on Ser-19, Ser-31 and Ser-40 by several protein kinases with different site specificities. Phosphorylation at Ser-31 and Ser-40 leads to an increase of TH activity. Phosphorylation at Ser-40 activates the enzyme and also counteracts the feedback inhibition of TH by catecholamines. Phosphorylation of Ser-19 and Ser-31 triggers the proteasomal degradation of TH through the ubiquitin-proteasome pathway. Phosphorylation at Ser-31 facilitates transport of TH from the soma to the nerve terminals via the microtubule network. Phosphorylation at Ser-19 induces the high-affinity binding to the 14-3-3 protein YWHAG; this interaction may influence the phosphorylation and dephosphorylation of other sites. Ser-19 increases the phosphorylation at Ser-40 in a hierarchical manner, leading to increased activity.

It localises to the cytoplasm. Its subcellular location is the perinuclear region. The protein resides in the nucleus. The protein localises to the cell projection. It is found in the axon. It localises to the cytoplasmic vesicle. Its subcellular location is the secretory vesicle. The protein resides in the synaptic vesicle. It catalyses the reaction (6R)-L-erythro-5,6,7,8-tetrahydrobiopterin + L-tyrosine + O2 = (4aS,6R)-4a-hydroxy-L-erythro-5,6,7,8-tetrahydrobiopterin + L-dopa. The protein operates within catecholamine biosynthesis; dopamine biosynthesis; dopamine from L-tyrosine: step 1/2. With respect to regulation, inhibited in feedback fashion by the catecholamine neurotransmitters, especially by dopamine in competition with tetrahydrobiopterin. Phosphorylation of several Ser/Thr residues in the N-terminus regulates the catalytic activity. Ser-31 and Ser-40 are readily phosphorylated to activate the catalytic activity. A Cysteine modification induced by N-ethylmaleimide (NEM), inhibits tyrosine 3-monooxygenase activity through the modification of the Cys-170. Functionally, catalyzes the conversion of L-tyrosine to L-dihydroxyphenylalanine (L-Dopa), the rate-limiting step in the biosynthesis of catecholamines, dopamine, noradrenaline, and adrenaline. Uses tetrahydrobiopterin and molecular oxygen to convert tyrosine to L-Dopa. In addition to tyrosine, is able to catalyze the hydroxylation of phenylalanine and tryptophan with lower specificity. Positively regulates the regression of retinal hyaloid vessels during postnatal development. This chain is Tyrosine 3-monooxygenase (TH), found in Bos taurus (Bovine).